Here is a 259-residue protein sequence, read N- to C-terminus: Protein LEAD-SENSITIVE 1 (259 aa).

The 149-residue stretch at 20–168 (YSWRTAYIYA…CKTALLVLEG (149 aa)) folds into the LRAT domain. Residues His-30 and His-42 contribute to the active site. The active-site Acyl-thioester intermediate is Cys-152.

Highly expressed in inflorescences, siliques and stems, and, to a lower extent, in roots and leaves.

Its subcellular location is the cytoplasm. In terms of biological role, confers tolerance to lead ions (Pb) stress mediated by Pb(NO(3))(2) probably by promoting Pb accumulation leading to subsequent glutathione-dependent phytochelatin (PC) synthesis and related gene expression, including PDR12/ABCG40, GSH1, GSH2, GR1, GR2, PCS1 and PCS2. This is Protein LEAD-SENSITIVE 1 from Arabidopsis thaliana (Mouse-ear cress).